An 84-amino-acid polypeptide reads, in one-letter code: Toxin Tf2 (84 aa).

The first 20 residues, M1–G20, serve as a signal peptide directing secretion. An LCN-type CS-alpha/beta domain is found at K21–G83. 4 disulfide bridges follow: C31/C82, C35/C58, C43/C63, and C47/C65. C82 is subject to Cysteine amide.

This sequence belongs to the long (4 C-C) scorpion toxin superfamily. Sodium channel inhibitor family. Beta subfamily. Contains 4 disulfide bonds. Expressed by the venom gland.

It is found in the secreted. Beta toxins bind voltage-independently at site-4 of sodium channels (Nav) and shift the voltage of activation toward more negative potentials thereby affecting sodium channel activation and promoting spontaneous and repetitive firing. This toxin is active against hNav1.3/SCN3A. This Tityus fasciolatus (Central Brazilian scorpion) protein is Toxin Tf2.